The chain runs to 784 residues: 1-phosphatidylinositol 4,5-bisphosphate phosphodiesterase delta-3-A (784 aa).

The disordered stretch occupies residues 1 to 25; the sequence is MLGRKKNPETVQTESKSVESKTHDP. Basic and acidic residues predominate over residues 16 to 25; the sequence is KSVESKTHDP. The region spanning 38-149 is the PH domain; it reads LLMLQGSKMM…WVRGIRTLKD (112 aa). The segment at 48 to 78 is substrate binding; it reads KVRSQRWRKDRRLKLLEDCVTVWCESSKTSR. EF-hand domains follow at residues 159 to 194, 195 to 230, and 227 to 262; these read KLDHWIRGYLRRADQNQDGKMSYDEVKHLLQLINID, LNEQYARTLFKKCDRSCDGRLDHVEIEEFCREMMRR, and MMRRPELDAVFRHYSGNGCVLTTLELRDFLGDQGED. Positions 172, 174, 176, 178, 183, 208, 210, 212, 214, and 219 each coordinate Ca(2+). Residues 313–458 form the PI-PLC X-box domain; sequence QDMSKPLAHY…LKGRILLKGK (146 aa). His328 is an active-site residue. Ca(2+) contacts are provided by Asn329, Glu358, and Asp360. Residue His373 is part of the active site. Position 407 (Glu407) interacts with Ca(2+). 2 residues coordinate substrate: Lys456 and Lys458. The interval 473 to 498 is disordered; sequence FTNSSDEESVAGGNKKESKKDLARSA. A compositionally biased stretch (basic and acidic residues) spans 486 to 495; sequence NKKESKKDLA. Positions 506 to 621 constitute a PI-PLC Y-box domain; the sequence is LSDLVVYCQS…GYVLKPEFLC (116 aa). Positions 534 and 561 each coordinate substrate. One can recognise a C2 domain in the interval 621–750; it reads CDPKSDFDPE…TGYRHVHLLK (130 aa). Ca(2+)-binding residues include Ile664, Asp666, Asn690, Asp719, and Asp721.

Requires Ca(2+) as cofactor.

It localises to the membrane. It is found in the cytoplasm. The protein localises to the cleavage furrow. The catalysed reaction is a 1,2-diacyl-sn-glycero-3-phospho-(1D-myo-inositol-4,5-bisphosphate) + H2O = 1D-myo-inositol 1,4,5-trisphosphate + a 1,2-diacyl-sn-glycerol + H(+). Hydrolyzes the phosphatidylinositol 4,5-bisphosphate (PIP2) to generate 2 second messenger molecules diacylglycerol (DAG) and inositol 1,4,5-trisphosphate (IP3). DAG mediates the activation of protein kinase C (PKC), while IP3 releases Ca(2+) from intracellular stores. The chain is 1-phosphatidylinositol 4,5-bisphosphate phosphodiesterase delta-3-A (plcd3a) from Danio rerio (Zebrafish).